We begin with the raw amino-acid sequence, 234 residues long: Biotin transport ATP-binding protein BioM (234 aa).

The ABC transporter domain maps to 1–230 (MQAIDIGHVT…YIAAMQALAR (230 aa)). 35–42 (GRNGAGKS) contributes to the ATP binding site.

It belongs to the ABC transporter superfamily. In terms of assembly, part of a biotin transporter holocomplex composed of BioM, BioN and BioY. BioMN complexes can be readily purified, but not BioMY complexes. Only the BioMNY complex has ATPase activity.

The protein localises to the cell inner membrane. Functionally, required for biotin uptake under very low (pM) biotin concentrations but not under higher (nM) concentrations. This chain is Biotin transport ATP-binding protein BioM (bioM), found in Rhodobacter capsulatus (strain ATCC BAA-309 / NBRC 16581 / SB1003).